The chain runs to 813 residues: Leucine--tRNA ligase (813 aa).

The short motif at 40–51 is the 'HIGH' region element; the sequence is SYPSGSKLHAGH. The 'KMSKS' region signature appears at 572-576; it reads KMSKS. An ATP-binding site is contributed by K575.

It belongs to the class-I aminoacyl-tRNA synthetase family.

The protein resides in the cytoplasm. It carries out the reaction tRNA(Leu) + L-leucine + ATP = L-leucyl-tRNA(Leu) + AMP + diphosphate. The polypeptide is Leucine--tRNA ligase (Clostridium botulinum (strain ATCC 19397 / Type A)).